The following is a 352-amino-acid chain: Glycerol-3-phosphate dehydrogenase [NAD(P)+] (352 aa).

NADPH contacts are provided by Trp-11, Arg-37, and Lys-112. Sn-glycerol 3-phosphate contacts are provided by Lys-112, Gly-153, and Ser-155. Ala-157 serves as a coordination point for NADPH. Positions 208, 261, 271, 272, and 273 each coordinate sn-glycerol 3-phosphate. Lys-208 functions as the Proton acceptor in the catalytic mechanism. Arg-272 contacts NADPH. The NADPH site is built by Val-296 and Glu-298.

Belongs to the NAD-dependent glycerol-3-phosphate dehydrogenase family.

The protein localises to the cytoplasm. It catalyses the reaction sn-glycerol 3-phosphate + NAD(+) = dihydroxyacetone phosphate + NADH + H(+). The catalysed reaction is sn-glycerol 3-phosphate + NADP(+) = dihydroxyacetone phosphate + NADPH + H(+). It functions in the pathway membrane lipid metabolism; glycerophospholipid metabolism. Functionally, catalyzes the reduction of the glycolytic intermediate dihydroxyacetone phosphate (DHAP) to sn-glycerol 3-phosphate (G3P), the key precursor for phospholipid synthesis. The polypeptide is Glycerol-3-phosphate dehydrogenase [NAD(P)+] (Polaromonas naphthalenivorans (strain CJ2)).